Reading from the N-terminus, the 332-residue chain is Lipoyl synthase (332 aa).

C55, C60, C66, C81, C85, C88, and S292 together coordinate [4Fe-4S] cluster. A Radical SAM core domain is found at 67–281; the sequence is WEDREATFLI…SDEAERIGFL (215 aa).

The protein belongs to the radical SAM superfamily. Lipoyl synthase family. [4Fe-4S] cluster is required as a cofactor.

The protein localises to the cytoplasm. It catalyses the reaction [[Fe-S] cluster scaffold protein carrying a second [4Fe-4S](2+) cluster] + N(6)-octanoyl-L-lysyl-[protein] + 2 oxidized [2Fe-2S]-[ferredoxin] + 2 S-adenosyl-L-methionine + 4 H(+) = [[Fe-S] cluster scaffold protein] + N(6)-[(R)-dihydrolipoyl]-L-lysyl-[protein] + 4 Fe(3+) + 2 hydrogen sulfide + 2 5'-deoxyadenosine + 2 L-methionine + 2 reduced [2Fe-2S]-[ferredoxin]. Its pathway is protein modification; protein lipoylation via endogenous pathway; protein N(6)-(lipoyl)lysine from octanoyl-[acyl-carrier-protein]: step 2/2. In terms of biological role, catalyzes the radical-mediated insertion of two sulfur atoms into the C-6 and C-8 positions of the octanoyl moiety bound to the lipoyl domains of lipoate-dependent enzymes, thereby converting the octanoylated domains into lipoylated derivatives. This chain is Lipoyl synthase, found in Beutenbergia cavernae (strain ATCC BAA-8 / DSM 12333 / CCUG 43141 / JCM 11478 / NBRC 16432 / NCIMB 13614 / HKI 0122).